Reading from the N-terminus, the 184-residue chain is Protein GrpE (184 aa).

The span at 1–14 (MANEQNEQSQDLSS) shows a compositional bias: polar residues. The disordered stretch occupies residues 1-35 (MANEQNEQSQDLSSEQTTQDHEQTQTEGVEQGAEI).

Belongs to the GrpE family. Homodimer.

Its subcellular location is the cytoplasm. Functionally, participates actively in the response to hyperosmotic and heat shock by preventing the aggregation of stress-denatured proteins, in association with DnaK and GrpE. It is the nucleotide exchange factor for DnaK and may function as a thermosensor. Unfolded proteins bind initially to DnaJ; upon interaction with the DnaJ-bound protein, DnaK hydrolyzes its bound ATP, resulting in the formation of a stable complex. GrpE releases ADP from DnaK; ATP binding to DnaK triggers the release of the substrate protein, thus completing the reaction cycle. Several rounds of ATP-dependent interactions between DnaJ, DnaK and GrpE are required for fully efficient folding. The protein is Protein GrpE of Acinetobacter baylyi (strain ATCC 33305 / BD413 / ADP1).